We begin with the raw amino-acid sequence, 366 residues long: Aminomethyltransferase (366 aa).

It belongs to the GcvT family. The glycine cleavage system is composed of four proteins: P, T, L and H.

The catalysed reaction is N(6)-[(R)-S(8)-aminomethyldihydrolipoyl]-L-lysyl-[protein] + (6S)-5,6,7,8-tetrahydrofolate = N(6)-[(R)-dihydrolipoyl]-L-lysyl-[protein] + (6R)-5,10-methylene-5,6,7,8-tetrahydrofolate + NH4(+). The glycine cleavage system catalyzes the degradation of glycine. The polypeptide is Aminomethyltransferase (Bacillus cereus (strain G9842)).